The primary structure comprises 599 residues: DNA primase (599 aa).

The segment at 40–64 (CPFHGENTPSFSVSPDKQLYHCFGC) adopts a CHC2-type zinc-finger fold. The region spanning 259–342 (NEAVLFEGYV…KVAMIPDGLD (84 aa)) is the Toprim domain. Residues glutamate 265, aspartate 309, and aspartate 311 each contribute to the Mg(2+) site.

This sequence belongs to the DnaG primase family. In terms of assembly, monomer. Interacts with DnaB. The cofactor is Zn(2+). It depends on Mg(2+) as a cofactor.

It catalyses the reaction ssDNA + n NTP = ssDNA/pppN(pN)n-1 hybrid + (n-1) diphosphate.. In terms of biological role, RNA polymerase that catalyzes the synthesis of short RNA molecules used as primers for DNA polymerase during DNA replication. This Halalkalibacterium halodurans (strain ATCC BAA-125 / DSM 18197 / FERM 7344 / JCM 9153 / C-125) (Bacillus halodurans) protein is DNA primase.